The following is a 155-amino-acid chain: Protein FAM162B (155 aa).

The helical transmembrane segment at Val95 to Val114 threads the bilayer.

The protein belongs to the UPF0389 family.

The protein localises to the membrane. The sequence is that of Protein FAM162B (fam162b) from Danio rerio (Zebrafish).